The sequence spans 160 residues: Endoribonuclease YbeY (160 aa).

Residues His123, His127, and His133 each coordinate Zn(2+).

Belongs to the endoribonuclease YbeY family. The cofactor is Zn(2+).

Its subcellular location is the cytoplasm. Single strand-specific metallo-endoribonuclease involved in late-stage 70S ribosome quality control and in maturation of the 3' terminus of the 16S rRNA. The protein is Endoribonuclease YbeY of Roseiflexus sp. (strain RS-1).